The sequence spans 159 residues: Na(+)/H(+) antiporter subunit E1 (159 aa).

4 helical membrane-spanning segments follow: residues 1–21 (MAIQ…LSGS), 27–47 (LLLG…ILPG), 49–69 (FYFI…VELL), and 101–121 (WQIV…VLGI).

Belongs to the CPA3 antiporters (TC 2.A.63) subunit E family. As to quaternary structure, may form a heterooligomeric complex that consists of seven subunits: mnhA1, mnhB1, mnhC1, mnhD1, mnhE1, mnhF1 and mnhG1.

It is found in the cell membrane. Mnh complex is a Na(+)/H(+) antiporter involved in Na(+) excretion. This chain is Na(+)/H(+) antiporter subunit E1 (mnhE1), found in Staphylococcus haemolyticus (strain JCSC1435).